The chain runs to 138 residues: Large ribosomal subunit protein uL16 (138 aa).

Positions Met1–Gln13 are enriched in basic residues. A disordered region spans residues Met1–Thr22.

The protein belongs to the universal ribosomal protein uL16 family. In terms of assembly, part of the 50S ribosomal subunit.

Binds 23S rRNA and is also seen to make contacts with the A and possibly P site tRNAs. The chain is Large ribosomal subunit protein uL16 from Thiobacillus denitrificans (strain ATCC 25259 / T1).